The sequence spans 493 residues: Cytochrome P450 2E1 (493 aa).

298–303 is a binding site for substrate; it reads FAGTET. Cys437 provides a ligand contact to heme.

The protein belongs to the cytochrome P450 family. As to quaternary structure, interacts with chaperones HSP70 and HSP90; this interaction is required for initial targeting to mitochondria. Heme serves as cofactor.

It is found in the endoplasmic reticulum membrane. It localises to the microsome membrane. Its subcellular location is the mitochondrion inner membrane. The catalysed reaction is an organic molecule + reduced [NADPH--hemoprotein reductase] + O2 = an alcohol + oxidized [NADPH--hemoprotein reductase] + H2O + H(+). It carries out the reaction (5Z,8Z,11Z)-eicosatrienoate + reduced [NADPH--hemoprotein reductase] + O2 = 19-hydroxy-(5Z,8Z,11Z)-eicosatrienoate + oxidized [NADPH--hemoprotein reductase] + H2O + H(+). The enzyme catalyses (5Z,8Z,11Z,14Z,17Z)-eicosapentaenoate + reduced [NADPH--hemoprotein reductase] + O2 = 19-hydroxy-(5Z,8Z,11Z,14Z,17Z)-eicosapentaenoate + oxidized [NADPH--hemoprotein reductase] + H2O + H(+). It catalyses the reaction (4Z,7Z,10Z,13Z,16Z,19Z)-docosahexaenoate + reduced [NADPH--hemoprotein reductase] + O2 = 21-hydroxy-(4Z,7Z,10Z,13Z,16Z,19Z)-docosahexaenoate + oxidized [NADPH--hemoprotein reductase] + H2O + H(+). The catalysed reaction is dodecanoate + reduced [NADPH--hemoprotein reductase] + O2 = 11-hydroxydodecanoate + oxidized [NADPH--hemoprotein reductase] + H2O + H(+). It carries out the reaction tetradecanoate + reduced [NADPH--hemoprotein reductase] + O2 = 13-hydroxytetradecanoate + oxidized [NADPH--hemoprotein reductase] + H2O + H(+). The enzyme catalyses 4-nitrophenol + NADPH + O2 + H(+) = 4-nitrocatechol + NADP(+) + H2O. The protein operates within lipid metabolism; fatty acid metabolism. The omega-1 hydroxylase activity is stimulated by cytochrome b5. Functionally, a cytochrome P450 monooxygenase involved in the metabolism of fatty acids. Mechanistically, uses molecular oxygen inserting one oxygen atom into a substrate, and reducing the second into a water molecule, with two electrons provided by NADPH via cytochrome P450 reductase (NADPH--hemoprotein reductase). Catalyzes the hydroxylation of carbon-hydrogen bonds. Hydroxylates fatty acids specifically at the omega-1 position displaying the highest catalytic activity for saturated fatty acids. May be involved in the oxidative metabolism of xenobiotics. The protein is Cytochrome P450 2E1 (CYP2E1) of Oryctolagus cuniculus (Rabbit).